The primary structure comprises 558 residues: Dihydroxy-acid dehydratase (558 aa).

Residue C49 coordinates [2Fe-2S] cluster. D81 lines the Mg(2+) pocket. Position 122 (C122) interacts with [2Fe-2S] cluster. Mg(2+)-binding residues include D123 and K124. The residue at position 124 (K124) is an N6-carboxylysine. C194 is a binding site for [2Fe-2S] cluster. E446 provides a ligand contact to Mg(2+). S472 serves as the catalytic Proton acceptor.

It belongs to the IlvD/Edd family. Homodimer. It depends on [2Fe-2S] cluster as a cofactor. Mg(2+) serves as cofactor.

It catalyses the reaction (2R)-2,3-dihydroxy-3-methylbutanoate = 3-methyl-2-oxobutanoate + H2O. It carries out the reaction (2R,3R)-2,3-dihydroxy-3-methylpentanoate = (S)-3-methyl-2-oxopentanoate + H2O. Its pathway is amino-acid biosynthesis; L-isoleucine biosynthesis; L-isoleucine from 2-oxobutanoate: step 3/4. It functions in the pathway amino-acid biosynthesis; L-valine biosynthesis; L-valine from pyruvate: step 3/4. Functionally, functions in the biosynthesis of branched-chain amino acids. Catalyzes the dehydration of (2R,3R)-2,3-dihydroxy-3-methylpentanoate (2,3-dihydroxy-3-methylvalerate) into 2-oxo-3-methylpentanoate (2-oxo-3-methylvalerate) and of (2R)-2,3-dihydroxy-3-methylbutanoate (2,3-dihydroxyisovalerate) into 2-oxo-3-methylbutanoate (2-oxoisovalerate), the penultimate precursor to L-isoleucine and L-valine, respectively. The sequence is that of Dihydroxy-acid dehydratase from Synechococcus sp. (strain RCC307).